Reading from the N-terminus, the 79-residue chain is Major outer membrane lipoprotein Lpp 2 (79 aa).

The N-terminal stretch at 1 to 21 (MNRTNQLILGAVVLGSTLLAG) is a signal peptide. Cys-22 carries the N-palmitoyl cysteine lipid modification. A lipid anchor (S-diacylglycerol cysteine) is attached at Cys-22. 2 repeats span residues 25-35 (NAKIDQLSSDV) and 39-49 (SAKVEQLSNDV). Residues 28 to 69 (IDQLSSDVQTLSAKVEQLSNDVNAMRSDVQAAKDDAARANQR) are a coiled coil. An N6-murein peptidoglycan lysine modification is found at Lys-79.

This sequence belongs to the Lpp family. As to quaternary structure, homotrimer.

Its subcellular location is the cell outer membrane. The protein resides in the secreted. It is found in the cell wall. Its function is as follows. Plays an important role in virulence. A highly abundant outer membrane lipoprotein that controls the distance between the inner and outer membranes. The only protein known to be covalently linked to the peptidoglycan network (PGN). Also non-covalently binds the PGN. The link between the cell outer membrane and PGN contributes to maintenance of the structural and functional integrity of the cell envelope, and maintains the correct distance between the PGN and the outer membrane. In Salmonella typhimurium (strain LT2 / SGSC1412 / ATCC 700720), this protein is Major outer membrane lipoprotein Lpp 2.